The following is a 509-amino-acid chain: Cytochrome P450 4A10 (509 aa).

Helical transmembrane passes span 15–35 (LSGFLQVASVLGLLLLLVKAV) and 121–141 (LLAPWIGYGLLLLNGQPWFQH). Glu320 is a binding site for heme. A Phosphoserine modification is found at Ser439. Heme is bound at residue Cys456.

The protein belongs to the cytochrome P450 family. Heme serves as cofactor. As to expression, highly expressed in the kidneys of both genders.

The protein localises to the endoplasmic reticulum membrane. The protein resides in the microsome membrane. The catalysed reaction is an omega-methyl-long-chain fatty acid + reduced [NADPH--hemoprotein reductase] + O2 = an omega-hydroxy-long-chain fatty acid + oxidized [NADPH--hemoprotein reductase] + H2O + H(+). The enzyme catalyses dodecanoate + reduced [NADPH--hemoprotein reductase] + O2 = 12-hydroxydodecanoate + oxidized [NADPH--hemoprotein reductase] + H2O + H(+). It catalyses the reaction dodecanoate + reduced [NADPH--hemoprotein reductase] + O2 = 11-hydroxydodecanoate + oxidized [NADPH--hemoprotein reductase] + H2O + H(+). It carries out the reaction tetradecanoate + reduced [NADPH--hemoprotein reductase] + O2 = 14-hydroxytetradecanoate + oxidized [NADPH--hemoprotein reductase] + H2O + H(+). The catalysed reaction is hexadecanoate + reduced [NADPH--hemoprotein reductase] + O2 = 16-hydroxyhexadecanoate + oxidized [NADPH--hemoprotein reductase] + H2O + H(+). The enzyme catalyses (9Z)-octadecenoate + reduced [NADPH--hemoprotein reductase] + O2 = 18-hydroxy-(9Z)-octadecenoate + oxidized [NADPH--hemoprotein reductase] + H2O + H(+). It catalyses the reaction (9Z,12Z)-octadecadienoate + reduced [NADPH--hemoprotein reductase] + O2 = 18-hydroxy-(9Z,12Z)-octadecadienoate + oxidized [NADPH--hemoprotein reductase] + H2O + H(+). It carries out the reaction (9Z,12Z)-octadecadienoate + reduced [NADPH--hemoprotein reductase] + O2 = 17-hydroxy-(9Z,12Z)-octadecadienoate + oxidized [NADPH--hemoprotein reductase] + H2O + H(+). The catalysed reaction is (5Z,8Z,11Z,14Z)-eicosatetraenoate + reduced [NADPH--hemoprotein reductase] + O2 = 20-hydroxy-(5Z,8Z,11Z,14Z)-eicosatetraenoate + oxidized [NADPH--hemoprotein reductase] + H2O + H(+). The enzyme catalyses 8,9-epoxy-(5Z,11Z,14Z)-eicosatrienoate + reduced [NADPH--hemoprotein reductase] + O2 = 20-hydroxy-8,9-epoxy-(5Z,11Z,14Z)-eicosatrienoate + oxidized [NADPH--hemoprotein reductase] + H2O + H(+). A cytochrome P450 monooxygenase involved in the metabolism of fatty acids. Catalyzes predominantly the oxidation of the terminal carbon (omega-oxidation) of long-chain fatty acids. Acts as a major omega-hydroxylase for dodecanoic (lauric) acid in liver. In kidney, may play an important role in omega-hydroxylation of (5Z,8Z,11Z,14Z)-eicosatetraenoic acid (arachidonate) to 20-hydroxyeicosatetraenoic acid (20-HETE), a signaling molecule acting both as vasoconstrictive and natriuretic with overall effect on arterial blood pressure. Also participates in the formation of anti-inflammatory hydroxyepoxyeicosatrienoic acids (HEETs) in kidney by converting 8,9-epoxyeicosatrienoic acid (EET) to 20,8,9-HEET, an activator of PPARA. Displays substantially lower fatty acid omega-1 hydroxylase activity. Mechanistically, uses molecular oxygen inserting one oxygen atom into a substrate, and reducing the second into a water molecule, with two electrons provided by NADPH via cytochrome P450 reductase (CPR; NADPH-ferrihemoprotein reductase). This Mus musculus (Mouse) protein is Cytochrome P450 4A10.